The chain runs to 300 residues: Protein TRACHEARY ELEMENT DIFFERENTIATION-RELATED 7A (300 aa).

A disordered region spans residues 1–181; that stretch reads MASPLSQSVF…HIIPPPPPSP (181 aa). Residues 1–187 are Extracellular-facing; the sequence is MASPLSQSVF…PPSPSNHSTT (187 aa). A compositionally biased stretch (pro residues) spans 12 to 181; it reads HFPPPSPAAT…HIIPPPPPSP (170 aa). An N-linked (GlcNAc...) asparagine glycan is attached at asparagine 183. The chain crosses the membrane as a helical span at residues 188 to 208; that stretch reads IVVIFVSCGGVFFLAFAMAAL. The Cytoplasmic portion of the chain corresponds to 209 to 300; the sequence is WCFLKKKKKK…SSFGHHYLHG (92 aa).

In terms of tissue distribution, accumulates in cells differentiating into tracheary element (TE) which undergo secondary cell wall (SCW) formation.

The protein localises to the cell membrane. The protein resides in the secreted. It localises to the cell wall. Involved in the secondary cell wall (SCW) formation of vessel elements (e.g. protoxylem and metaxylem), thus promoting tracheary element (TE) differentiation. The chain is Protein TRACHEARY ELEMENT DIFFERENTIATION-RELATED 7A from Zinnia elegans (Garden zinnia).